The chain runs to 594 residues: Transcription factor TFIIIB component B'' (594 aa).

The disordered stretch occupies residues 1 to 169 (MSSIVNKSGT…ARRLSTISNK (169 aa)). A Phosphoserine modification is found at Ser-49. Polar residues predominate over residues 150-168 (LDSSSNSNGTARRLSTISN). At Ser-178 the chain carries Phosphoserine. 2 disordered regions span residues 217-245 (SPPTAMTDSLDRNEFSSETSTSREADENE) and 317-343 (ARQEFKPLHSLTKEEQEEEEEKRKEER). Basic and acidic residues-rich tracts occupy residues 225–241 (SLDRNEFSSETSTSREA) and 317–330 (ARQEFKPLHSLTKE). One can recognise an SANT domain in the interval 415–466 (SYTDPWTVEEMIKFYKALSMWGTDFNLISQLYPYRSRKQVKAKFVNEEKKRP). Over residues 520-529 (KNTAKEEDQT) the composition is skewed to basic and acidic residues. 2 disordered regions span residues 520–547 (KNTAKEEDQTAQRLNDANLNKKGSGGIM) and 567–594 (LKRKKLKERNNDDNEDNEGSEEEPEIDQ). Positions 579–594 (DNEDNEGSEEEPEIDQ) are enriched in acidic residues.

It belongs to the TFC5 family. In terms of assembly, TFIIIB comprises the TATA-binding protein (TBP), the B-related factor (BRF) and the B'' component (BDP1). Interacts with TFC4.

Its subcellular location is the nucleus. In terms of biological role, general activator of RNA polymerase III transcription. The protein is Transcription factor TFIIIB component B'' (BDP1) of Saccharomyces cerevisiae (strain ATCC 204508 / S288c) (Baker's yeast).